A 341-amino-acid chain; its full sequence is L-threonine 3-dehydrogenase (341 aa).

Cys38 is a Zn(2+) binding site. Residues Thr40 and His43 each act as charge relay system in the active site. Zn(2+) is bound by residues His63, Glu64, Cys93, Cys96, Cys99, and Cys107. Residues Ile175, Asp195, Arg200, Leu262–Ile264, and Ile286–Tyr287 each bind NAD(+).

It belongs to the zinc-containing alcohol dehydrogenase family. Homotetramer. It depends on Zn(2+) as a cofactor.

The protein localises to the cytoplasm. It catalyses the reaction L-threonine + NAD(+) = (2S)-2-amino-3-oxobutanoate + NADH + H(+). It participates in amino-acid degradation; L-threonine degradation via oxydo-reductase pathway; glycine from L-threonine: step 1/2. Functionally, catalyzes the NAD(+)-dependent oxidation of L-threonine to 2-amino-3-ketobutyrate. In Shewanella oneidensis (strain ATCC 700550 / JCM 31522 / CIP 106686 / LMG 19005 / NCIMB 14063 / MR-1), this protein is L-threonine 3-dehydrogenase.